Consider the following 397-residue polypeptide: Cathepsin E-B (397 aa).

Positions 1–16 (MRQILVLLLFVTLVYG) are cleaved as a signal peptide. The propeptide at 17 to 49 (LIRVPLKRQKSIRKTPKEKGKLSHVWTQQGIDM) is activation peptide. One can recognise a Peptidase A1 domain in the interval 74–385 (YFGEISIGTP…DRGNNRVGLA (312 aa)). N-linked (GlcNAc...) asparagine glycosylation is present at asparagine 86. Aspartate 92 is an active-site residue. Cysteine 105 and cysteine 110 are oxidised to a cystine. Asparagine 130 is a glycosylation site (N-linked (GlcNAc...) asparagine). Residues cysteine 268 and cysteine 272 are joined by a disulfide bond. The active site involves aspartate 277. An intrachain disulfide couples cysteine 310 to cysteine 344.

The protein belongs to the peptidase A1 family. Homodimer; disulfide-linked. In terms of processing, glycosylated. Contains high mannose-type oligosaccharide. Expressed predominantly in the anterior and posterior adult stomach and at much lower levels in the larval foregut.

It is found in the endosome. The catalysed reaction is Similar to cathepsin D, but slightly broader specificity.. Functionally, may have a role in immune function. Probably involved in the processing of antigenic peptides during MHC class II-mediated antigen presentation. The protein is Cathepsin E-B (ctse-b) of Xenopus laevis (African clawed frog).